The following is an 87-amino-acid chain: Protein E7 (87 aa).

The segment at 1–38 (MHGPHPTVKDIELSLAPEDVPVQCNVQLDEEDYTNVEE) is E7 terminal domain. A zinc finger lies at 50–86 (CPKCSSPLRLVVECSHADIRALEQLLLGTLTVVCPRC). Residues 68 to 76 (IRALEQLLL) carry the Nuclear export signal motif.

Belongs to the papillomaviridae E7 protein family. As to quaternary structure, homodimer. Homooligomer. Interacts with host RB1; this interaction induces dissociation of RB1-E2F1 complex thereby disrupting RB1 activity. Interacts with host EP300; this interaction represses EP300 transcriptional activity. Interacts with protein E2; this interaction inhibits E7 oncogenic activity. Interacts with host TMEM173/STING; this interaction impairs the ability of TMEM173/STING to sense cytosolic DNA and promote the production of type I interferon (IFN-alpha and IFN-beta). In terms of processing, highly phosphorylated.

The protein localises to the host cytoplasm. It is found in the host nucleus. In terms of biological role, plays a role in viral genome replication by driving entry of quiescent cells into the cell cycle. Stimulation of progression from G1 to S phase allows the virus to efficiently use the cellular DNA replicating machinery to achieve viral genome replication. E7 protein has both transforming and trans-activating activities. Induces the disassembly of the E2F1 transcription factor from RB1, with subsequent transcriptional activation of E2F1-regulated S-phase genes. Interferes with host histone deacetylation mediated by HDAC1 and HDAC2, leading to transcription activation. Also plays a role in the inhibition of both antiviral and antiproliferative functions of host interferon alpha. Interaction with host TMEM173/STING impairs the ability of TMEM173/STING to sense cytosolic DNA and promote the production of type I interferon (IFN-alpha and IFN-beta). The chain is Protein E7 from Human papillomavirus 28.